Here is a 47-residue protein sequence, read N- to C-terminus: Defensin-2 (47 aa).

4 cysteine pairs are disulfide-bonded: Cys-3-Cys-47, Cys-14-Cys-35, Cys-20-Cys-41, and Cys-24-Cys-43.

Belongs to the DEFL family. As to expression, epidermis and vascular bundles of pods, stems, roots, leaves and wet or dry seeds.

Possesses antifungal activity sensitive to inorganic cations. The protein is Defensin-2 of Pisum sativum (Garden pea).